We begin with the raw amino-acid sequence, 393 residues long: Putative competence-damage inducible protein (393 aa).

Belongs to the CinA family.

The protein is Putative competence-damage inducible protein of Streptococcus suis (strain 05ZYH33).